The primary structure comprises 79 residues: Acyl carrier protein (79 aa).

Residues 2-77 (SDIEARVKKI…NAVDYATKNQ (76 aa)) enclose the Carrier domain. The residue at position 37 (Ser-37) is an O-(pantetheine 4'-phosphoryl)serine.

Belongs to the acyl carrier protein (ACP) family. Post-translationally, 4'-phosphopantetheine is transferred from CoA to a specific serine of apo-ACP by AcpS. This modification is essential for activity because fatty acids are bound in thioester linkage to the sulfhydryl of the prosthetic group.

The protein localises to the cytoplasm. The protein operates within lipid metabolism; fatty acid biosynthesis. Carrier of the growing fatty acid chain in fatty acid biosynthesis. This is Acyl carrier protein from Variovorax paradoxus (strain S110).